Reading from the N-terminus, the 416-residue chain is Multifunctional CCA protein (416 aa).

ATP-binding residues include Gly8 and Arg11. 2 residues coordinate CTP: Gly8 and Arg11. Mg(2+)-binding residues include Asp21 and Asp23. ATP is bound by residues Arg91, Arg137, and Arg140. CTP-binding residues include Arg91, Arg137, and Arg140. Residues 228–329 (TGLHTMMVLA…IKLFDKADFW (102 aa)) form the HD domain.

It belongs to the tRNA nucleotidyltransferase/poly(A) polymerase family. Bacterial CCA-adding enzyme type 1 subfamily. Monomer. Can also form homodimers and oligomers. Requires Mg(2+) as cofactor. The cofactor is Ni(2+).

The enzyme catalyses a tRNA precursor + 2 CTP + ATP = a tRNA with a 3' CCA end + 3 diphosphate. It catalyses the reaction a tRNA with a 3' CCA end + 2 CTP + ATP = a tRNA with a 3' CCACCA end + 3 diphosphate. Its function is as follows. Catalyzes the addition and repair of the essential 3'-terminal CCA sequence in tRNAs without using a nucleic acid template. Adds these three nucleotides in the order of C, C, and A to the tRNA nucleotide-73, using CTP and ATP as substrates and producing inorganic pyrophosphate. tRNA 3'-terminal CCA addition is required both for tRNA processing and repair. Also involved in tRNA surveillance by mediating tandem CCA addition to generate a CCACCA at the 3' terminus of unstable tRNAs. While stable tRNAs receive only 3'-terminal CCA, unstable tRNAs are marked with CCACCA and rapidly degraded. The sequence is that of Multifunctional CCA protein from Shewanella sp. (strain MR-7).